A 351-amino-acid chain; its full sequence is UDP-3-O-acylglucosamine N-acyltransferase (351 aa).

His239 (proton acceptor) is an active-site residue.

This sequence belongs to the transferase hexapeptide repeat family. LpxD subfamily. In terms of assembly, homotrimer.

It catalyses the reaction a UDP-3-O-[(3R)-3-hydroxyacyl]-alpha-D-glucosamine + a (3R)-hydroxyacyl-[ACP] = a UDP-2-N,3-O-bis[(3R)-3-hydroxyacyl]-alpha-D-glucosamine + holo-[ACP] + H(+). It participates in bacterial outer membrane biogenesis; LPS lipid A biosynthesis. In terms of biological role, catalyzes the N-acylation of UDP-3-O-acylglucosamine using 3-hydroxyacyl-ACP as the acyl donor. Is involved in the biosynthesis of lipid A, a phosphorylated glycolipid that anchors the lipopolysaccharide to the outer membrane of the cell. This chain is UDP-3-O-acylglucosamine N-acyltransferase, found in Vibrio cholerae serotype O1 (strain ATCC 39315 / El Tor Inaba N16961).